A 235-amino-acid chain; its full sequence is Small ribosomal subunit protein uS2 (235 aa).

Belongs to the universal ribosomal protein uS2 family.

The chain is Small ribosomal subunit protein uS2 from Synechococcus sp. (strain RCC307).